A 993-amino-acid polypeptide reads, in one-letter code: Glycine dehydrogenase (decarboxylating) (993 aa).

Lys-715 carries the N6-(pyridoxal phosphate)lysine modification.

Belongs to the GcvP family. The glycine cleavage system is composed of four proteins: P, T, L and H. The cofactor is pyridoxal 5'-phosphate.

It carries out the reaction N(6)-[(R)-lipoyl]-L-lysyl-[glycine-cleavage complex H protein] + glycine + H(+) = N(6)-[(R)-S(8)-aminomethyldihydrolipoyl]-L-lysyl-[glycine-cleavage complex H protein] + CO2. Its function is as follows. The glycine cleavage system catalyzes the degradation of glycine. The P protein binds the alpha-amino group of glycine through its pyridoxal phosphate cofactor; CO(2) is released and the remaining methylamine moiety is then transferred to the lipoamide cofactor of the H protein. This chain is Glycine dehydrogenase (decarboxylating), found in Xylella fastidiosa (strain Temecula1 / ATCC 700964).